The primary structure comprises 471 residues: Zinc finger protein 385B (471 aa).

The tract at residues Met-1–Leu-93 is required for induction of apoptosis. Residues Ser-34–Gln-64 form a Matrin-type 1 zinc finger. 2 disordered regions span residues Gln-50 to Thr-92 and His-175 to Glu-275. The segment covering Ala-76–Thr-92 has biased composition (low complexity). An interaction with p53/TP53 region spans residues Pro-94–Tyr-471. The Matrin-type 2 zinc-finger motif lies at Ile-157–Ala-187. Residues Ala-206–Ser-220 are compositionally biased toward polar residues. Positions Lys-230 to Gly-250 are enriched in low complexity. Residues Thr-260–Ala-269 are compositionally biased toward polar residues. Residues Lys-282 to Arg-316 form a Matrin-type 3 zinc finger. Residues Gly-318–Gly-340 form a disordered region. The Matrin-type 4 zinc finger occupies Phe-348 to Gly-378.

In terms of assembly, interacts with p53/TP53; the interaction is direct. In terms of tissue distribution, detected in germinal center of lymph node (at protein level). Expressed in spleen, lymph node and tonsil.

The protein resides in the nucleus. Functionally, may play a role in p53/TP53-mediated apoptosis. The chain is Zinc finger protein 385B (ZNF385B) from Homo sapiens (Human).